A 174-amino-acid polypeptide reads, in one-letter code: Interleukin-1 receptor antagonist protein (174 aa).

Positions 1–23 are cleaved as a signal peptide; it reads MDIYIHGYLICLLLFLFRSETAC. Cys89 and Cys139 are disulfide-bonded. The N-linked (GlcNAc...) asparagine glycan is linked to Asn107.

It belongs to the IL-1 family.

It localises to the secreted. Functionally, anti-inflammatory antagonist of interleukin-1 family of proinflammatory cytokines such as interleukin-1beta/IL1B and interleukin-1alpha/IL1A. Protects from immune dysregulation and uncontrolled systemic inflammation triggered by IL1 for a range of innate stimulatory agents such as pathogens. The sequence is that of Interleukin-1 receptor antagonist protein (IL1RN) from Bos taurus (Bovine).